The chain runs to 392 residues: Phospho-N-acetylmuramoyl-pentapeptide-transferase (392 aa).

The next 10 membrane-spanning stretches (helical) occupy residues Ile-28–Ala-48, Thr-76–Leu-96, Val-101–Leu-121, Met-137–Leu-157, Trp-181–Thr-201, Gly-213–Ala-233, Gly-268–Phe-288, Val-295–Leu-315, Val-320–Val-340, and Lys-369–Leu-389.

The protein belongs to the glycosyltransferase 4 family. MraY subfamily. It depends on Mg(2+) as a cofactor.

The protein resides in the cell inner membrane. The catalysed reaction is UDP-N-acetyl-alpha-D-muramoyl-L-alanyl-gamma-D-glutamyl-meso-2,6-diaminopimeloyl-D-alanyl-D-alanine + di-trans,octa-cis-undecaprenyl phosphate = di-trans,octa-cis-undecaprenyl diphospho-N-acetyl-alpha-D-muramoyl-L-alanyl-D-glutamyl-meso-2,6-diaminopimeloyl-D-alanyl-D-alanine + UMP. The protein operates within cell wall biogenesis; peptidoglycan biosynthesis. In terms of biological role, catalyzes the initial step of the lipid cycle reactions in the biosynthesis of the cell wall peptidoglycan: transfers peptidoglycan precursor phospho-MurNAc-pentapeptide from UDP-MurNAc-pentapeptide onto the lipid carrier undecaprenyl phosphate, yielding undecaprenyl-pyrophosphoryl-MurNAc-pentapeptide, known as lipid I. This Myxococcus xanthus (strain DK1622) protein is Phospho-N-acetylmuramoyl-pentapeptide-transferase.